The chain runs to 313 residues: Ribose-phosphate pyrophosphokinase (313 aa).

ATP is bound by residues 40 to 42 (DGE) and 98 to 99 (RQ). Mg(2+) is bound by residues H132 and D172. K195 is an active-site residue. D-ribose 5-phosphate-binding positions include R197, D221, and 225 to 229 (DTAGT).

Belongs to the ribose-phosphate pyrophosphokinase family. Class I subfamily. Homohexamer. Mg(2+) is required as a cofactor.

The protein resides in the cytoplasm. It carries out the reaction D-ribose 5-phosphate + ATP = 5-phospho-alpha-D-ribose 1-diphosphate + AMP + H(+). It functions in the pathway metabolic intermediate biosynthesis; 5-phospho-alpha-D-ribose 1-diphosphate biosynthesis; 5-phospho-alpha-D-ribose 1-diphosphate from D-ribose 5-phosphate (route I): step 1/1. Its function is as follows. Involved in the biosynthesis of the central metabolite phospho-alpha-D-ribosyl-1-pyrophosphate (PRPP) via the transfer of pyrophosphoryl group from ATP to 1-hydroxyl of ribose-5-phosphate (Rib-5-P). The chain is Ribose-phosphate pyrophosphokinase from Porphyromonas gingivalis (strain ATCC BAA-308 / W83).